The sequence spans 1020 residues: X-linked retinitis pigmentosa GTPase regulator (1020 aa).

RCC1 repeat units follow at residues asparagine 54–glycine 105, glycine 106–aspartate 158, glycine 159–aspartate 208, glycine 209–asparagine 261, alanine 262–isoleucine 313, and glycine 314–proline 367. Phosphoserine occurs at positions 418 and 518. Disordered regions lie at residues histidine 609–lysine 776, glutamate 790–alanine 906, and aspartate 989–leucine 1020. Basic and acidic residues-rich tracts occupy residues leucine 618–serine 636, glutamate 644–threonine 665, glutamate 685–lysine 698, aspartate 704–serine 715, lysine 760–lysine 771, glutamate 790–lysine 802, glutamate 816–glutamate 853, and serine 883–alanine 906. A compositionally biased stretch (polar residues) spans asparagine 996–asparagine 1009. At cysteine 1017 the chain carries Cysteine methyl ester. Cysteine 1017 carries the S-geranylgeranyl cysteine lipid modification. A propeptide spans threonine 1018 to leucine 1020 (removed in mature form).

In terms of assembly, interacts with SPATA7. Interacts with CEP290. Interacts with WHRN. Interacts with PDE6D. Interacts with RPGRIP1. Interacts with RPGRIP1L. PDE6D, RPGRIP1 and RPGRIP1L may compete for the same binding sites. Interacts with RAB37 and RAB8A (in GDP-bound forms); functions as GEF for RAB37 and RAB8A. Isoform 6 interacts with NPM1 (via C-terminus). Isoform 6 interacts with SMC1A and SMC3. Prenylated. Heart, brain, placenta, lung, liver, muscle, kidney, retina, pancreas and fetal retinal pigment epithelium. Isoform 3 is found only in the retina. Colocalizes with RPGRIP1 in the outer segment of rod photoreceptors and cone outer segments.

It localises to the cytoplasm. Its subcellular location is the cytoskeleton. The protein resides in the flagellum axoneme. It is found in the golgi apparatus. The protein localises to the cell projection. It localises to the cilium. Its subcellular location is the microtubule organizing center. The protein resides in the centrosome. It is found in the cilium basal body. The protein localises to the cilium axoneme. In terms of biological role, acts as a guanine-nucleotide releasing factor (GEF) for RAB8A and RAB37 by promoting the conversion of inactive RAB-GDP to the active form RAB-GTP. GEF activity towards RAB8A may facilitate ciliary trafficking by modulating ciliary intracellular localization of RAB8A. GEF activity towards RAB37 maintains autophagic homeostasis and retinal function. Involved in photoreceptor integrity. May control cilia formation by regulating actin stress filaments and cell contractility. May be involved in microtubule organization and regulation of transport in primary cilia. May play a critical role in spermatogenesis and in intraflagellar transport processes. In Homo sapiens (Human), this protein is X-linked retinitis pigmentosa GTPase regulator.